Here is a 944-residue protein sequence, read N- to C-terminus: MVSDRRLLKKFGKIADKIIALEPQMRQLKDEDFILKTQEFKQMLENGKSLDDILIEVYAVAREAARRVLGLNAYKMQLIGGIILNSGDIAEMRTGEGKTLTGIFPAYLNALSGKGVHIVTVNEYLSRRDSEINGKVFDLLGISVGLNGSSLTKTEKREAYNKDITYTTNAELGFDYLRDNMVSDYSLKVQRKLNYCIIDEADSVLIDEARTPLIISGGTSTRINLYKAANNFALTLKEHDDLDIDLESKQVYLNEQGMKKANEFFSLKNLFAIENTEIFHLIMNALKAQFAFKEGVEYTVRDNEILLIDQFTGRIMHGRSYSDGLQQALQAKENVDIEEETVTLATITYQNFYRLYSKIAGMTGTAKTEEEEFIKIYNTRVIQTPTNKPVIRKDEPDLTFGTKNAALKKLVEDVLEAHKKGAPILIGTTSVESSEQIARYLKKANLKFETINAKNHDREAEIVAKAGEIGAITLATNMAGRGTDIKLAKGVAELGGLRVFGVERNEARRIDNQLRGRSGRQGDPGLSRFYISMDDDLMMRFTAPKTRQRFKALGDDYIKSKMFTRAVTNAQKKLEGMNFDQRKNVLDYDNILAQQREIIYAQRDDILEANDLSVVIEKMQITAAYELIEKHSTLVHGEKTINKKELLEVIDGILVPKNKFRIDDFNNKEKMDLAVEIAEAMMQLYKARISDIPDDVIIVMERKIILDAFDKHWTKHLDIAGKLKSGIYLQQYAQNNPLAIYIEQATNLFNKMKINIANEVVENLANVILRVVEDEEQREERIEVTDKDIEEILFETGLQPSDINNKAINQRFDELEEEFKDDKQKLRRLRIQRDVMLGLVLELERRAEMIISPQNDQQAITQLIKELQNDIDIASITIDQIHQNFNNMVEQINDPEKLKHLVIAKDVLLQLVARMDDIKEQEKQTRKKKKKKPHEDESSKTKIG.

ATP-binding positions include Q77, 95–99 (GEGKT), and D484. A disordered region spans residues 920 to 944 (EQEKQTRKKKKKKPHEDESSKTKIG). Over residues 933 to 944 (PHEDESSKTKIG) the composition is skewed to basic and acidic residues.

It belongs to the SecA family. Monomer and homodimer. Part of the essential Sec protein translocation apparatus which comprises SecA, SecYEG and auxiliary proteins SecDF. Other proteins may also be involved.

Its subcellular location is the cell membrane. It localises to the cytoplasm. The enzyme catalyses ATP + H2O + cellular proteinSide 1 = ADP + phosphate + cellular proteinSide 2.. In terms of biological role, part of the Sec protein translocase complex. Interacts with the SecYEG preprotein conducting channel. Has a central role in coupling the hydrolysis of ATP to the transfer of proteins into and across the cell membrane, serving as an ATP-driven molecular motor driving the stepwise translocation of polypeptide chains across the membrane. This chain is Protein translocase subunit SecA, found in Mycoplasma mycoides subsp. mycoides SC (strain CCUG 32753 / NCTC 10114 / PG1).